Consider the following 758-residue polypeptide: Thiosulfate reductase molybdopterin-containing subunit PhsA (758 aa).

Positions 1-30 (MSISRRSFLQGVGIGCSACALGAFPPGALA) form a signal peptide, tat-type signal. The 4Fe-4S Mo/W bis-MGD-type domain occupies 41-97 (TTLTPSLCEMCSFRCPIQAQVVNNKTVFIQGNPSAPQQGTRICARGGSGVSLVNDPQ). Residues C48, C51, C55, and C83 each contribute to the [4Fe-4S] cluster site.

Belongs to the prokaryotic molybdopterin-containing oxidoreductase family. In terms of assembly, composed of three subunits: PhsA, PhsB and PhsC. [4Fe-4S] cluster is required as a cofactor. Requires Mo-bis(molybdopterin guanine dinucleotide) as cofactor. Post-translationally, predicted to be exported by the Tat system. The position of the signal peptide cleavage has not been experimentally proven.

Its subcellular location is the periplasm. The catalysed reaction is a quinone + hydrogen sulfide + sulfite + 2 H(+) = thiosulfate + a quinol. In terms of biological role, component of the PhsABC thiosulfate reductase that catalyzes the reduction of thiosulfate to sulfite and hydrogen sulfide, with menaquinol as the sole electron donor. Proton motive force (PMF) is required to drive transmembrane electron transfer within the reductase. The PhsA subunit contains the active site molybdenum-bis(molybdopterin guanine dinucleotide) (Mo-bis-MGD) cofactor. The chain is Thiosulfate reductase molybdopterin-containing subunit PhsA from Salmonella typhimurium (strain LT2 / SGSC1412 / ATCC 700720).